The chain runs to 632 residues: SH2B adapter protein 2 (632 aa).

At tyrosine 52 the chain carries Phosphotyrosine. The residue at position 141 (serine 141) is a Phosphoserine. The region spanning 193–306 (DIQREGALRF…WVADIQGCVD (114 aa)) is the PH domain. Phosphoserine is present on serine 310. The tract at residues 381 to 409 (TLESPGGSGSDSNNTGEQGAETDPEAEPE) is disordered. Over residues 400–409 (AETDPEAEPE) the composition is skewed to acidic residues. One can recognise an SH2 domain in the interval 417 to 515 (WFHGTLSRVK…SADITLRSYV (99 aa)). Disordered regions lie at residues 516 to 537 (RAQDPPPEPGPTPPAAPASPAC) and 558 to 632 (ASPS…YSFY). Positions 519–532 (DPPPEPGPTPPAAP) are enriched in pro residues. Composition is skewed to low complexity over residues 558 to 579 (ASPSDAAGASSSSASSSSAASG) and 604 to 626 (EAVAATAAEEPPEAAPGRARAVE). At tyrosine 629 the chain carries Phosphotyrosine.

It belongs to the SH2B adapter family. Homodimer. Interacts with KIT/c-KIT, SHC1, EPOR, PDGFR, VAV1 and VAV3. Interacts (via N-terminal region) with SHC1. Interacts (via the phosphorylated C-terminus) with GRB2. Interacts (via its SH2 domain) with EPOR, INSR and KIT. Interacts with GRB2 after B-cell antigen receptor stimulation. Interacts (via PH domain) with VAV3. Interacts with NTRK1, NTRK2 and NTRK3 (phosphorylated); after stimulation of the receptor by its extracellular ligand and subsequent autophosphorylation of the receptor. Binds INSR, GRB2, ASB6 and CAP. Insulin stimulation leads to dissociation of CAP. Binds CBS only when SH2B2/APS has become phosphorylated. INSR binding does not depend on the phosphorylation of SH2B2/APS. Post-translationally, tyrosine phosphorylated by JAK2, KIT and other kinases activated by B-cell receptor in response to stimulation with cytokines, IL3, IL5, PDGF, IGF1, IGF2, CSF2/GM-CSF and cross-linking of the B-cell receptor complex. As to expression, expressed in spleen, prostate, testis, uterus, small intestine and skeletal muscle. Among hematopoietic cell lines, expressed exclusively in B-cells. Not expressed in most tumor cell lines.

It is found in the cytoplasm. The protein localises to the cell membrane. Its function is as follows. Adapter protein for several members of the tyrosine kinase receptor family. Involved in multiple signaling pathways. May be involved in coupling from immunoreceptor to Ras signaling. Acts as a negative regulator of cytokine signaling in collaboration with CBL. Binds to EPOR and suppresses EPO-induced STAT5 activation, possibly through a masking effect on STAT5 docking sites in EPOR. Suppresses PDGF-induced mitogenesis. May induce cytoskeletal reorganization via interaction with VAV3. This Homo sapiens (Human) protein is SH2B adapter protein 2 (SH2B2).